Reading from the N-terminus, the 55-residue chain is Large ribosomal subunit protein bL33 (55 aa).

Belongs to the bacterial ribosomal protein bL33 family.

The protein is Large ribosomal subunit protein bL33 of Ruegeria sp. (strain TM1040) (Silicibacter sp.).